Here is a 539-residue protein sequence, read N- to C-terminus: 3-methylmercaptopropionyl-CoA ligase (539 aa).

Mg(2+) is bound at residue Thr-185. Positions 231, 303, 324, 325, and 329 each coordinate ATP. A Mg(2+)-binding site is contributed by Glu-330. Residues Gln-359, Asp-417, Arg-432, and Lys-523 each contribute to the ATP site.

It belongs to the ATP-dependent AMP-binding enzyme family. Homodimer. Mg(2+) serves as cofactor.

It catalyses the reaction 3-(methylsulfanyl)propanoate + ATP + CoA = 3-(methylsulfanyl)propanoyl-CoA + AMP + diphosphate. The protein operates within lipid metabolism; fatty acid metabolism. Its activity is regulated as follows. Activated by LiCl and NH(4)Cl. Inhibited by dimethylsulfoniopropionate (DMSP). MMPA concentrations above 2 mM relieve the DMSP inhibition and 80% of activity is regained at an MMPA concentration of 8 mM. Involved in the assimilation of dimethylsulphoniopropionate (DMSP), an important compound in the fixation of carbon in marine phytoplankton. Catalyzes the ATP-dependent ligation of methylmercaptopropionate (MMPA) and CoA to yield methylmercaptopropionate-CoA (MMPA-CoA). It is also active with short-chain-fatty-acid (carboxylic acids up to six carbons in length). The chain is 3-methylmercaptopropionyl-CoA ligase from Ruegeria pomeroyi (strain ATCC 700808 / DSM 15171 / DSS-3) (Silicibacter pomeroyi).